We begin with the raw amino-acid sequence, 194 residues long: MMTMTPRDLMRAQYVTRWQIVPTTRSQSVAQHSWAVAMLAMNLWCRRTGGQPGEAATDVELGKIAVMALWHDAPEVFTGDINTPTKIFLNASNALDELENTAGDGYLESMDGGPIRTCVKIADFLEAMYWLMEHGDGHYANNQLHGLNERFHQYLNEHAPLWRDSAVALWKELSDVNAETTTFQRVNYLKANDA.

Residue arginine 17 participates in dATP binding. Positions 32, 71, 72, 75, 80, and 123 each coordinate Co(2+).

It belongs to the Caudovirales dATP triphosphohydrolase family. Requires Co(2+) as cofactor.

The catalysed reaction is dATP + H2O = 2'-deoxyadenosine + triphosphate + H(+). The enzyme catalyses dADP + H2O = 2'-deoxyadenosine + diphosphate. It carries out the reaction dAMP + H2O = 2'-deoxyadenosine + phosphate. Catalyzes the hydrolysis of dATP, dADP and dAMP into dA. This step is essential for Z-genome synthesis (containing aminoadenine instead of adenine). Specifically removes dATP and its precursor dADP from the nucleotide pool of the host, preventing the incorporation of A into the phage genome and favoring the integration of the Z-base into the viral genome. The sequence is that of dATP triphosphohydrolase (datZ) from Salmonella phage PMBT28.